Here is a 201-residue protein sequence, read N- to C-terminus: Small ribosomal subunit protein uS4 (201 aa).

Residues 93–155 (CRLDNIVYRM…SKSLSMFEVN (63 aa)) form the S4 RNA-binding domain.

Belongs to the universal ribosomal protein uS4 family. In terms of assembly, part of the 30S ribosomal subunit. Contacts protein S5. The interaction surface between S4 and S5 is involved in control of translational fidelity.

In terms of biological role, one of the primary rRNA binding proteins, it binds directly to 16S rRNA where it nucleates assembly of the body of the 30S subunit. Its function is as follows. With S5 and S12 plays an important role in translational accuracy. This Elusimicrobium minutum (strain Pei191) protein is Small ribosomal subunit protein uS4.